Consider the following 834-residue polypeptide: Periplasmic nitrate reductase (834 aa).

The segment at residues 1–32 is a signal peptide (tat-type signal); the sequence is MTEPKIDRRQLLKLEAAAIAAAAAGMPTVARA. Residues 44-100 enclose the 4Fe-4S Mo/W bis-MGD-type domain; the sequence is LKWDKAACRFCGTGCSVMVATKDNRVVATHGDIKAEVNRGLNCVKGYFLSKIMYGHD. Residues cysteine 51, cysteine 54, cysteine 58, and cysteine 86 each contribute to the [4Fe-4S] cluster site. Residues lysine 88, glutamine 155, asparagine 180, cysteine 184, 217-224, 248-252, 267-269, methionine 378, glutamine 382, asparagine 488, 514-515, lysine 537, aspartate 564, and 724-733 contribute to the Mo-bis(molybdopterin guanine dinucleotide) site; these read WGSNMAEM, STFEH, QTD, SD, and TGRVVEHWHS. Substrate is bound at residue tryptophan 800. Asparagine 808 and lysine 825 together coordinate Mo-bis(molybdopterin guanine dinucleotide).

The protein belongs to the prokaryotic molybdopterin-containing oxidoreductase family. NasA/NapA/NarB subfamily. In terms of assembly, component of the periplasmic nitrate reductase NapAB complex composed of NapA and NapB. [4Fe-4S] cluster serves as cofactor. It depends on Mo-bis(molybdopterin guanine dinucleotide) as a cofactor. In terms of processing, predicted to be exported by the Tat system. The position of the signal peptide cleavage has not been experimentally proven.

It is found in the periplasm. The catalysed reaction is 2 Fe(II)-[cytochrome] + nitrate + 2 H(+) = 2 Fe(III)-[cytochrome] + nitrite + H2O. Functionally, catalytic subunit of the periplasmic nitrate reductase complex NapAB. Receives electrons from NapB and catalyzes the reduction of nitrate to nitrite. The chain is Periplasmic nitrate reductase from Bradyrhizobium sp. (strain ORS 278).